The chain runs to 186 residues: Ribosome-recycling factor (186 aa).

The protein belongs to the RRF family.

The protein localises to the cytoplasm. Its function is as follows. Responsible for the release of ribosomes from messenger RNA at the termination of protein biosynthesis. May increase the efficiency of translation by recycling ribosomes from one round of translation to another. The sequence is that of Ribosome-recycling factor from Burkholderia thailandensis (strain ATCC 700388 / DSM 13276 / CCUG 48851 / CIP 106301 / E264).